Reading from the N-terminus, the 570-residue chain is PTS system lactose-specific EIICB component (570 aa).

One can recognise a PTS EIIC type-3 domain in the interval 9–410 (IEKGKPFFEK…VVDIIIYYPF (402 aa)). The next 9 helical transmembrane spans lie at 31–51 (GFISAMPVILFSSIFLLIAYV), 65–85 (AILMKPYNYTMGLVAFLVAGT), 104–124 (INFISTMQAAMCGFLFLASDP), 133–153 (AFMGTKGLLTAFLSAFVTVIV), 178–198 (FKDLIPFSAVIIILYALDLVI), 223–243 (GWIGVTIIFGAFALFWFVGIH), 283–303 (MFIVTFGGTGATLVVPFMFMW), 340–360 (VFFIPFVLAPIVNVWIFKLFV), and 382–402 (IIMGTGFGLWSFVLAITLIVV). Residues 467–570 (QTNVLVLCAG…LDFVQQQFEN (104 aa)) enclose the PTS EIIB type-3 domain. Cys474 serves as the catalytic Phosphocysteine intermediate; for EIIB activity. Cys474 is modified (phosphocysteine; by EIIA).

Its subcellular location is the cell membrane. It carries out the reaction lactose(out) + N(pros)-phospho-L-histidyl-[protein] = lactose 6-phosphate(in) + L-histidyl-[protein]. Its function is as follows. The phosphoenolpyruvate-dependent sugar phosphotransferase system (sugar PTS), a major carbohydrate active transport system, catalyzes the phosphorylation of incoming sugar substrates concomitantly with their translocation across the cell membrane. The enzyme II LacEF PTS system is involved in lactose transport, but can also use galactose, isopropyl beta-thio-galactopyranoside and thiomethyl beta-D-galactopyranoside (TMG) as substrates. The sequence is that of PTS system lactose-specific EIICB component from Staphylococcus aureus.